The following is a 217-amino-acid chain: MPKKFQGENTKSAVARARKAEAKAVADAKRQKEIEDAYWQDDDKHVMRKGQRKEDKEKKRLEQLERKKESQRLLEEEDSKMKGKPIKPAAPSKVTRAQIEETLHREEEEKAISEKPKTHLEIPLEENLNRRILEEGEVEARTVEDAIAALSMSKELDRHPERRMKAAFTAFEEINMPRIKQENPNMRLSQLKQLLKKEWMKSPENPMNQQHATYNAQ.

A disordered region spans residues 1 to 95; that stretch reads MPKKFQGENT…IKPAAPSKVT (95 aa). Composition is skewed to basic and acidic residues over residues 18 to 45 and 52 to 74; these read RKAE…DDKH and RKED…QRLL. Positions 45–115 form a coiled coil; it reads HVMRKGQRKE…EEEEKAISEK (71 aa).

This sequence belongs to the CCDC124 family. As to quaternary structure, associates with translationally inactive ribosomes in the nonrotated state.

The protein localises to the cytoplasm. The protein resides in the cytoskeleton. Its subcellular location is the microtubule organizing center. It is found in the centrosome. It localises to the midbody. In terms of biological role, ribosome-binding protein involved in ribosome hibernation: associates with translationally inactive ribosomes and stabilizes the nonrotated conformation of the 80S ribosome, thereby promoting ribosome preservation and storage. This is Coiled-coil domain-containing protein 124 (ccdc124) from Xenopus tropicalis (Western clawed frog).